The chain runs to 422 residues: Tyrosine--tRNA ligase (422 aa).

Tyr-35 provides a ligand contact to L-tyrosine. Residues 40–49 carry the 'HIGH' region motif; the sequence is PTAPSLHVGH. 2 residues coordinate L-tyrosine: Tyr-170 and Gln-174. The 'KMSKS' region signature appears at 231-235; sequence KFGKT. Lys-234 provides a ligand contact to ATP. The S4 RNA-binding domain occupies 353–419; that stretch reads APVVDLFAEV…GKKNLAAVEI (67 aa).

It belongs to the class-I aminoacyl-tRNA synthetase family. TyrS type 1 subfamily. Homodimer.

It is found in the cytoplasm. It catalyses the reaction tRNA(Tyr) + L-tyrosine + ATP = L-tyrosyl-tRNA(Tyr) + AMP + diphosphate + H(+). Its function is as follows. Catalyzes the attachment of tyrosine to tRNA(Tyr) in a two-step reaction: tyrosine is first activated by ATP to form Tyr-AMP and then transferred to the acceptor end of tRNA(Tyr). This is Tyrosine--tRNA ligase from Streptomyces coelicolor (strain ATCC BAA-471 / A3(2) / M145).